The chain runs to 168 residues: Photosystem I assembly protein Ycf3 (168 aa).

TPR repeat units lie at residues 35 to 68, 72 to 105, and 120 to 153; these read AFTYYRDGMSAQSEGNYAEALQNYYEAMRLEIDP, SYILYNIGLIHTSNGEHTKALEYYFRALERNPFL, and GEQAIRQGDSEIAEAWFDQAAEYWKQAIALTPGN.

This sequence belongs to the Ycf3 family.

The protein resides in the plastid. It localises to the chloroplast thylakoid membrane. Essential for the assembly of the photosystem I (PSI) complex. May act as a chaperone-like factor to guide the assembly of the PSI subunits. The polypeptide is Photosystem I assembly protein Ycf3 (Populus alba (White poplar)).